Here is a 509-residue protein sequence, read N- to C-terminus: Bifunctional purine biosynthesis protein PurH (509 aa).

The 144-residue stretch at 1-144 folds into the MGS-like domain; that stretch reads MKRALLSVSD…KNARDVIVVV (144 aa).

This sequence belongs to the PurH family.

It carries out the reaction (6R)-10-formyltetrahydrofolate + 5-amino-1-(5-phospho-beta-D-ribosyl)imidazole-4-carboxamide = 5-formamido-1-(5-phospho-D-ribosyl)imidazole-4-carboxamide + (6S)-5,6,7,8-tetrahydrofolate. The enzyme catalyses IMP + H2O = 5-formamido-1-(5-phospho-D-ribosyl)imidazole-4-carboxamide. It functions in the pathway purine metabolism; IMP biosynthesis via de novo pathway; 5-formamido-1-(5-phospho-D-ribosyl)imidazole-4-carboxamide from 5-amino-1-(5-phospho-D-ribosyl)imidazole-4-carboxamide (10-formyl THF route): step 1/1. Its pathway is purine metabolism; IMP biosynthesis via de novo pathway; IMP from 5-formamido-1-(5-phospho-D-ribosyl)imidazole-4-carboxamide: step 1/1. The polypeptide is Bifunctional purine biosynthesis protein PurH (Oenococcus oeni (strain ATCC BAA-331 / PSU-1)).